We begin with the raw amino-acid sequence, 657 residues long: MGNFKIHSKFKPTGDQPKAIETILKSIKKGNEFQTLLGVTGSGKTFTMANIIEKLQRPTLILAHNKTLAAQLCSEFKEFFPENIVEYFVSYYDYYQPEAYVPQTDTFIEKDASINDEIDKLRHSATSALFERRDVIIVASVSCIYGLGNPDEYKKLTISLRKGMQKERDEIIKKLIEIQYERNDIDFSRGTFRVRGDLLDIIPSSTSSKGIRIEFFGDEIDRIREFDVLTGTILGERNHVLIFPASHFATSKETVERSLGEIENELENRLRELNSQEKLLEAQRLRQRTNFDIEMIREMGYCSGIENYSRILDGRAPGTPPKTLIDYFPEDFLLFIDESHVTLPQVRAMYAGDRSRKNTLVDYGFRLPCAYDNRPLKFEEFEKKINQVMFVSATPAQYELEHSQSIAEQVIRPTGLLDPEIIIKPVKGQIDDLYTEIQETISRGYRILITTLTKRMAEDLTKYMIELGVKATYMHSDIDTIERMKIIRDLRLGEYDVLVGINLLREGLDIPEVALVAILDADKEGFLRSETSLIQTIGRAARNSESKVIMYADNITKSMKKAISETERRRKIQTEYNEEHGIIPQTINKEVRDLIEATKVAEESTEYGIEATKSLTKKEVKKLIKEYTEEMMLAAKNLQFERAAQLRDEIEELKGKE.

Positions 25-182 (KSIKKGNEFQ…KKLIEIQYER (158 aa)) constitute a Helicase ATP-binding domain. Residue 38 to 45 (GVTGSGKT) participates in ATP binding. The short motif at 91–114 (YYDYYQPEAYVPQTDTFIEKDASI) is the Beta-hairpin element. In terms of domain architecture, Helicase C-terminal spans 429-595 (QIDDLYTEIQ…TINKEVRDLI (167 aa)). The UVR domain maps to 621-656 (KKLIKEYTEEMMLAAKNLQFERAAQLRDEIEELKGK).

Belongs to the UvrB family. As to quaternary structure, forms a heterotetramer with UvrA during the search for lesions. Interacts with UvrC in an incision complex.

Its subcellular location is the cytoplasm. Functionally, the UvrABC repair system catalyzes the recognition and processing of DNA lesions. A damage recognition complex composed of 2 UvrA and 2 UvrB subunits scans DNA for abnormalities. Upon binding of the UvrA(2)B(2) complex to a putative damaged site, the DNA wraps around one UvrB monomer. DNA wrap is dependent on ATP binding by UvrB and probably causes local melting of the DNA helix, facilitating insertion of UvrB beta-hairpin between the DNA strands. Then UvrB probes one DNA strand for the presence of a lesion. If a lesion is found the UvrA subunits dissociate and the UvrB-DNA preincision complex is formed. This complex is subsequently bound by UvrC and the second UvrB is released. If no lesion is found, the DNA wraps around the other UvrB subunit that will check the other stand for damage. The chain is UvrABC system protein B from Clostridium botulinum (strain Alaska E43 / Type E3).